Consider the following 1216-residue polypeptide: ATP-dependent helicase/nuclease subunit A (1216 aa).

Positions 26–488 (QKKTAEQIEA…ILLKENFRSS (463 aa)) constitute a UvrD-like helicase ATP-binding domain. An ATP-binding site is contributed by 47-54 (ASAGSGKT). A UvrD-like helicase C-terminal domain is found at 515 to 802 (KHQLVFANTK…ELMTIHKSKG (288 aa)).

It belongs to the helicase family. AddA subfamily. As to quaternary structure, heterodimer of AddA and AddB/RexB. Mg(2+) is required as a cofactor.

The enzyme catalyses Couples ATP hydrolysis with the unwinding of duplex DNA by translocating in the 3'-5' direction.. It carries out the reaction ATP + H2O = ADP + phosphate + H(+). Functionally, the heterodimer acts as both an ATP-dependent DNA helicase and an ATP-dependent, dual-direction single-stranded exonuclease. Recognizes the chi site generating a DNA molecule suitable for the initiation of homologous recombination. The AddA nuclease domain is required for chi fragment generation; this subunit has the helicase and 3' -&gt; 5' nuclease activities. This Streptococcus pneumoniae (strain CGSP14) protein is ATP-dependent helicase/nuclease subunit A.